The primary structure comprises 263 residues: Small ribosomal subunit protein eS4 (263 aa).

One can recognise an S4 RNA-binding domain in the interval 42-104 (LPLVIFLRNR…TNELFRLIYD (63 aa)).

This sequence belongs to the eukaryotic ribosomal protein eS4 family.

The chain is Small ribosomal subunit protein eS4 (RpS4) from Bombyx mori (Silk moth).